The sequence spans 122 residues: Truncated CrmB protein (122 aa).

Its function is as follows. The protein is truncated in this strain and presumably inactive. It has similarities with variola virus CrmB, but the product is inactivated due to several premature stop codons. This Bos taurus (Bovine) protein is Truncated CrmB protein (OPG002).